The sequence spans 334 residues: DGAT1/2-independent enzyme synthesizing storage lipids (334 aa).

Topologically, residues 1 to 50 (MTNKNQSFGVGQDSMSSMTCLIHVLEAWFGVEHLEDYWNFANYLLWVFTP) are lumenal. N-linked (GlcNAc...) asparagine glycosylation is present at Asn5. A helical transmembrane segment spans residues 51–71 (LLLLILPYFTIFLLYLTIIFL). The Cytoplasmic segment spans residues 72-125 (HIYKRKNVLKEAYSHNLWDGARKTVATLWDGHAAVWHGYEVHGMEKIPEEGPAL). A helical membrane pass occupies residues 126–146 (IIFYHGAIPIDFYYFMAKIFI). The active site involves His130. At 147 to 334 (HKGRTCRVVA…NKQKINQKTL (188 aa)) the chain is on the lumenal side.

Belongs to the diacylglycerol acyltransferase family. Highly divergent.

It is found in the endoplasmic reticulum membrane. The catalysed reaction is a 1,2-diacylglycerol + a 1,2-diacyl-sn-glycero-3-phosphocholine = a triacylglycerol + a 1-acyl-sn-glycero-3-phosphocholine. It catalyses the reaction a 1-O-alkyl-2-acyl-sn-glycero-3-phosphocholine + a 1,2-diacylglycerol = a 1-O-alkyl-sn-glycero-3-phosphocholine + a triacylglycerol. The enzyme catalyses a 2-acylglycerol + an acyl-CoA = a 1,2-diacylglycerol + CoA. It carries out the reaction an acyl-CoA + a 1,2-diacyl-sn-glycerol = a triacyl-sn-glycerol + CoA. The catalysed reaction is 2-(9Z-octadecenoyl)-glycerol + (9Z)-octadecenoyl-CoA = 1,2-di-(9Z-octadecenoyl)-glycerol + CoA. It catalyses the reaction 1,2-di-(9Z-octadecenoyl)-sn-glycerol + (9Z)-octadecenoyl-CoA = 1,2,3-tri-(9Z-octadecenoyl)-glycerol + CoA. Acyltransferase activity is specifically inhibited by TMX1 at the endoplasmic reticulum, restricting accumulation of triacylglycerol. Its function is as follows. Catalytic subunit of the alternative triglyceride biosynthesis pathway, which mediates formation of triacylglycerol from diacylglycerol and membrane phospholipids. Synthesizes triacylglycerol at the expense of membrane phospholipids, such as phosphatidylcholine (PC) and its ether-linked form (ePC), thereby altering the composition of membranes. The alternative triglyceride biosynthesis pathway is probably required to provide the energy required for rapid growth when fuel sources are limiting. It maintains mitochondrial function during periods of extracellular lipid starvation. Can also use acyl-CoA as donor: acts as a acyl-CoA:monoacylglycerol acyltransferase (MGAT), but also shows acyl-CoA:diacylglycerol acyltransferase (DGAT) activity. The chain is DGAT1/2-independent enzyme synthesizing storage lipids (TMEM68) from Bos taurus (Bovine).